Here is a 451-residue protein sequence, read N- to C-terminus: Rab GDP-dissociation inhibitor (451 aa).

Interaction with YPT1 regions lie at residues 106 to 112 (RYVDFKQ) and 234 to 259 (YPMYGLGELPQGFARLSAIYGGTYML).

Belongs to the Rab GDI family. Interacts with the GDP-bound form of Rab GTPase YPT1. Interacts with YPT10.

It is found in the cytoplasm. Functionally, regulates the GDP/GTP exchange reaction of SEC4 by inhibiting the dissociation of GDP from it, and the subsequent binding of GTP to SEC4. Plays an essential role in the yeast secretory pathway. Extracts GDP-bound YPT7 from vacuolar membranes, antagonizing vacuolar membrane fusion. The sequence is that of Rab GDP-dissociation inhibitor (GDI1) from Saccharomyces cerevisiae (strain ATCC 204508 / S288c) (Baker's yeast).